Consider the following 303-residue polypeptide: Enoyl-CoA hydratase domain-containing protein 3, mitochondrial (303 aa).

Residues 1-17 constitute a mitochondrion transit peptide; the sequence is MAAVAVLRAFGASGPMC. Residue K110 is modified to N6-succinyllysine.

Belongs to the enoyl-CoA hydratase/isomerase family. In terms of tissue distribution, expressed in adipocytes. Expressed in blood cells, with higher expression in patients with low coronary lesions.

It is found in the mitochondrion. May play a role in fatty acid biosynthesis and insulin sensitivity. This is Enoyl-CoA hydratase domain-containing protein 3, mitochondrial from Homo sapiens (Human).